A 440-amino-acid chain; its full sequence is P47(GAG-CRK) protein (440 aa).

The gag first part stretch occupies residues 1 to 208; the sequence is MEAVIKVISS…TPRGAEQPRA (208 aa). A PPXY motif motif is present at residues 174 to 177; that stretch reads PPPY. The interval 183-230 is disordered; the sequence is YPSLAGVGEQQGQGGDTPRGAEQPRAGRGAGHRGLRRPAGRGQRVRPA. The segment at 209-437 is CRK; that stretch reads GRGAGHRGLR…PSSASVSTLT (229 aa). Residues 212–221 are compositionally biased toward basic residues; the sequence is AGHRGLRRPA. Positions 248–354 constitute an SH2 domain; the sequence is WYWGRLSRGD…LDTTTLIEPV (107 aa). Residues 368–428 enclose the SH3 domain; it reads EEVEYVRALF…PVPYVEKCRP (61 aa). The interval 438–440 is gag second part; it reads GGR.

The protein is P47(GAG-CRK) protein of Avian sarcoma virus CT10 (Avian sarcoma virus (strain CT10)).